A 1131-amino-acid polypeptide reads, in one-letter code: MLHVSASKGMTEYFKNILDNVTELYTLADDCRKSGYDVTDHVEIPLAKDMADRVEGIVGPKNVAERIRELVSDLGKEPAALEIAKEIVEGKFGEFGREVGAEQAVRTALAVITEGIVAAPLEGIAHVKIKKNNDSGEYLAIYFAGPIRSAGGTAQALAVLVGDYVRKNMGLDKFKPTEDEVERYGEEVDLYQSEVTTFQYQPKAEEIRAAVRNISVEITGEATDDVEVSGHRDLPRVETNQIRGGALLALVEGVLLKAPKILRHVDKLGIEGWDWLKELKSKKEEVIEEIEEEKDDFNYEEEEDLSQYEDYEVEAVTKFIGEVIAGRPVFSHPSKKGGFRLRYGRSRNTGFATDGFHPAIMYLVDDFMAVGTQLKTERPGKATCVVPVDSIEGPIVRLKDKSVLKIDTVEKAKQYRDDVEEILFLGDILVNYGDFLENNHTILPSSWCTEWYEKILKSENLEYKKEFIENPDQKEAVNYAKLTKTPLHPKYTYFWHDISKDNINVLRNWIIGGKYNESNDSWEVTYDSENPEISNAKRYLELIGCPHTVTGEKLEIFEYYPLLYSLGYDFDEKRDIVEEIEEKLQNTKNNMHFINTIAPFEIRRNAYIYVGARMGRPEKAASRKMKPPVNGLFPIGNAGALVRLINKAVEEGKTDEIEISNVKCSCGNVSLYRTCPFCGNSVEPSGPSRIKLPIKEYWYKALENLKINKAGDVKCIKGMTSKDKIIEPLEKAILRAKNDIYVFKDGTTRFDCTDVPVTHFRPVEIHVGIEKLKSLGYLKDIHGNSLENEDQVLELKVQDVIVPESCMDYFFNVSKFIDDLLEKYYKKDRFYNVNKRDDLVGHLIIGMAPHTSAGMVGRIIGYSNANVGYAHPYFHASKRRNCDGDEDAFFLLLDAFMNFSKRFLPDKRGGQMDAPLVLTTILDPKEVDGEVHNMDSMWEYPIEFYEKSLEGIAPKEIKKIMQTVEDRLDKDSQYEGIGYTHETLKIDEGPLVCAYKTLGSMMEKTSAQLAVAKKIRATDERDVAEKVIQSHFVPDLIGNLRAFSRQGVRCKCGAKYRRMPLKGVCRKCGSRLILTVSKGAVEKYMDVSQTMAEKYEASDYIKQRLEIIRSGIDSLFVNDKRKQVKIEDFFK.

This sequence belongs to the archaeal DNA polymerase II family. Heterodimer of a large subunit and a small subunit.

It catalyses the reaction DNA(n) + a 2'-deoxyribonucleoside 5'-triphosphate = DNA(n+1) + diphosphate. The catalysed reaction is Exonucleolytic cleavage in the 3'- to 5'-direction to yield nucleoside 5'-phosphates.. Possesses two activities: a DNA synthesis (polymerase) and an exonucleolytic activity that degrades single-stranded DNA in the 3'- to 5'-direction. Has a template-primer preference which is characteristic of a replicative DNA polymerase. The polypeptide is DNA polymerase II large subunit (Methanococcus maripaludis (strain C7 / ATCC BAA-1331)).